The sequence spans 285 residues: Diaminopimelate epimerase (285 aa).

Asn15 and Asn68 together coordinate substrate. Cys77 (proton donor) is an active-site residue. Substrate-binding positions include 78-79 (GN), Asn165, Asn201, and 219-220 (ER). Cys228 serves as the catalytic Proton acceptor. 229 to 230 (GT) contacts substrate.

The protein belongs to the diaminopimelate epimerase family. In terms of assembly, homodimer.

It is found in the cytoplasm. The enzyme catalyses (2S,6S)-2,6-diaminopimelate = meso-2,6-diaminopimelate. Its pathway is amino-acid biosynthesis; L-lysine biosynthesis via DAP pathway; DL-2,6-diaminopimelate from LL-2,6-diaminopimelate: step 1/1. Catalyzes the stereoinversion of LL-2,6-diaminopimelate (L,L-DAP) to meso-diaminopimelate (meso-DAP), a precursor of L-lysine and an essential component of the bacterial peptidoglycan. The protein is Diaminopimelate epimerase of Synechococcus sp. (strain JA-3-3Ab) (Cyanobacteria bacterium Yellowstone A-Prime).